The following is a 336-amino-acid chain: uncharacterized protein (336 aa).

Residues 297-316 (KKDLQKSEEEEHPNDDHVYM) are compositionally biased toward basic and acidic residues. Residues 297–336 (KKDLQKSEEEEHPNDDHVYMTEEDDMEKIERGIESLGNGH) are disordered.

This is an uncharacterized protein from Invertebrate iridescent virus 6 (IIV-6).